Reading from the N-terminus, the 312-residue chain is Probable phytanoyl-CoA dioxygenase (312 aa).

2-oxoglutarate is bound by residues K84, M124, 142-144 (HQD), and W160. H142 and D144 together coordinate Fe cation. H231 contributes to the Fe cation binding site. The 2-oxoglutarate site is built by S233 and R242.

This sequence belongs to the PhyH family. Fe cation is required as a cofactor. Requires L-ascorbate as cofactor.

The enzyme catalyses phytanoyl-CoA + 2-oxoglutarate + O2 = 2-hydroxyphytanoyl-CoA + succinate + CO2. It functions in the pathway lipid metabolism; fatty acid metabolism. Its function is as follows. Converts phytanoyl-CoA to 2-hydroxyphytanoyl-CoA. This chain is Probable phytanoyl-CoA dioxygenase, found in Caenorhabditis elegans.